A 136-amino-acid chain; its full sequence is MARKEFRYRGYTLEELQEMPLDDVIKLFPSRQRRSLKRGFLPRQKKVLEKIRKIKKEGKTEGRPPVIRTHCRDMIVLPEMVGMTFGIHNGKEFVEVKIQPEMIGCYFGEFAPTRKKVEHGDPGMGATRFSMFVPLK.

It belongs to the universal ribosomal protein uS19 family.

In terms of biological role, protein S19 forms a complex with S13 that binds strongly to the 16S ribosomal RNA. The sequence is that of Small ribosomal subunit protein uS19 (rps19) from Methanothermobacter thermautotrophicus (strain ATCC 29096 / DSM 1053 / JCM 10044 / NBRC 100330 / Delta H) (Methanobacterium thermoautotrophicum).